The following is a 360-amino-acid chain: MTKKIIFTGGGTAGHVTLNLILIPKFIKDGWEVHYIGDDNGIEHQEIKKSGLDVTFHAIATGKLRRYFSWQNLLDAFKVGFGVMQSLFIIARLRPKALFSKGGFVSVPPVIAARLLGVPAFIHESDLSMGLANRIAYRFATTMYTTFEQEQTLVKLKHVGAVTKVTAPKSRSVASKQLAAVSEYFDPNLKTLLFIGGSAGARVFNRFITDHPELKEDFNIINISGDPSLNELSRHLYRVDYVTDLYQPLMEMADLVVTRGGSNTLFELLAMRKLQLIIPLGKEASRGDQLENAHYFTTRGYAEQLLEQELTLPHFQEKVREVFAKQSDYLSAMTSSSELQSPESFYQLLSADISSATKEN.

UDP-N-acetyl-alpha-D-glucosamine-binding positions include 12–14 (TAG), serine 198, and glutamine 289.

It belongs to the glycosyltransferase 28 family. MurG subfamily.

It is found in the cell membrane. It catalyses the reaction Mur2Ac(oyl-L-Ala-gamma-D-Glu-L-Lys-D-Ala-D-Ala)-di-trans,octa-cis-undecaprenyl diphosphate + UDP-N-acetyl-alpha-D-glucosamine = beta-D-GlcNAc-(1-&gt;4)-Mur2Ac(oyl-L-Ala-gamma-D-Glu-L-Lys-D-Ala-D-Ala)-di-trans,octa-cis-undecaprenyl diphosphate + UDP + H(+). The protein operates within cell wall biogenesis; peptidoglycan biosynthesis. In terms of biological role, cell wall formation. Catalyzes the transfer of a GlcNAc subunit on undecaprenyl-pyrophosphoryl-MurNAc-pentapeptide (lipid intermediate I) to form undecaprenyl-pyrophosphoryl-MurNAc-(pentapeptide)GlcNAc (lipid intermediate II). The polypeptide is UDP-N-acetylglucosamine--N-acetylmuramyl-(pentapeptide) pyrophosphoryl-undecaprenol N-acetylglucosamine transferase (Streptococcus equi subsp. zooepidemicus (strain MGCS10565)).